The chain runs to 333 residues: Ferrochelatase (333 aa).

2 residues coordinate Fe cation: His202 and Glu284.

Belongs to the ferrochelatase family.

It is found in the cytoplasm. It carries out the reaction heme b + 2 H(+) = protoporphyrin IX + Fe(2+). The protein operates within porphyrin-containing compound metabolism; protoheme biosynthesis; protoheme from protoporphyrin-IX: step 1/1. In terms of biological role, catalyzes the ferrous insertion into protoporphyrin IX. The protein is Ferrochelatase of Francisella tularensis subsp. mediasiatica (strain FSC147).